The chain runs to 184 residues: Peptidoglycan-recognition protein SC2 (184 aa).

An N-terminal signal peptide occupies residues 1–20; sequence MANKALILLAVLFCAQAVLG. The N-acetylmuramoyl-L-alanine amidase domain maps to 45–169; sequence SYAVIHHTAG…RQVGSTECPG (125 aa). Residue His50 coordinates Zn(2+). An intrachain disulfide couples Cys57 to Cys63. His159 and Cys167 together coordinate Zn(2+).

This sequence belongs to the N-acetylmuramoyl-L-alanine amidase 2 family. The cofactor is Zn(2+).

The protein localises to the secreted. It catalyses the reaction Hydrolyzes the link between N-acetylmuramoyl residues and L-amino acid residues in certain cell-wall glycopeptides.. Its function is as follows. N-acetylmuramyl-L-alanine amidase involved in innate immunity by degrading bacterial peptidoglycans (PGN). Probably plays a scavenger role by digesting biologically active PGN into biologically inactive fragments. Has no direct bacteriolytic activity. The polypeptide is Peptidoglycan-recognition protein SC2 (PGRP-SC2) (Drosophila simulans (Fruit fly)).